The following is a 764-amino-acid chain: MTTAHILGFPRIGAQRELKFALERYWRDGASADAERALVDTGRALRAEHWRIERDAGLDCVTVGDFAWYDHVLTTLAHVGGLPRRFGFDARALTLADYFAAARGNAAQPAMEMTKWFDTNYHYLVPEYSPATTFGPGVEWLFDEVREARALGYRAKAALVGPLTLLWLGKARDGLVERLALLPRLVPAYRALLARLREAGVDWVQIDEPIFSLDLPDAWRDAARPTYEALAPGAPKLLVATYFDDASEHAALLKALPVAGLHVDLVRADAQLDAFVADYPADKVLSCGIVDGRNVWRNDLDRSLARLAPVRDALGERLWVATSCSLLHVPVDLAHEPRLDEELKTWLAFAAQKTREVAALRDALVKGRAAVAAEFDDAAVVAAARRTSARIHNPLVKRRVAALTDADARRASAYSVRAAAQRARFGLPLLPTTTIGSFPQTPEIRRARAAFKQGVLDHLGYLEAMREQVRIAIDKQLAYGLDVLVHGEAERNDMVEYFGELLWGFAITSNGWVQSYGSRCVKPPLVYGDVYLPEPMTVGWASYAQSLSAKPVKGMLTGPVTMLQWSFVRDDQPRATTALQIALALRQETLDLEKAGIGMIQIDEPALREGLPLKARERAAYLDWAVRAFGIAASGVADDTQIHTHMCYSEFGDILPSIAALDADVISIETTRSNMELLDAFETFDYPNEIGPGVYDIHSPRVPDADEIERLILLALERIPAQRLWVNPDCGLKTREWRQVDAALAAMVDAAKRVRQKVEEAAPA.

5-methyltetrahydropteroyltri-L-glutamate is bound by residues 16 to 19 (RELK) and K115. L-homocysteine contacts are provided by residues 435–437 (IGS) and E488. L-methionine is bound by residues 435–437 (IGS) and E488. Residues 519 to 520 (RC) and W565 each bind 5-methyltetrahydropteroyltri-L-glutamate. D603 contributes to the L-homocysteine binding site. D603 contacts L-methionine. E609 is a binding site for 5-methyltetrahydropteroyltri-L-glutamate. Positions 645, 647, and 669 each coordinate Zn(2+). H698 acts as the Proton donor in catalysis. C730 provides a ligand contact to Zn(2+).

It belongs to the vitamin-B12 independent methionine synthase family. The cofactor is Zn(2+).

It carries out the reaction 5-methyltetrahydropteroyltri-L-glutamate + L-homocysteine = tetrahydropteroyltri-L-glutamate + L-methionine. The protein operates within amino-acid biosynthesis; L-methionine biosynthesis via de novo pathway; L-methionine from L-homocysteine (MetE route): step 1/1. Functionally, catalyzes the transfer of a methyl group from 5-methyltetrahydrofolate to homocysteine resulting in methionine formation. The chain is 5-methyltetrahydropteroyltriglutamate--homocysteine methyltransferase from Burkholderia mallei (strain NCTC 10247).